A 685-amino-acid chain; its full sequence is Tripartite terminase subunit 1 (685 aa).

The C3H1-type zinc finger occupies 173 to 201 (CWRCVGELMVLPNHGNPSTAEGTHVSCNH). Disordered stretches follow at residues 231–254 (EEKA…EAEG) and 394–423 (LGRG…SGAL). The segment covering 395 to 407 (GRGEEEASRESPE) has biased composition (basic and acidic residues). ATP is bound at residue 619–626 (YNKTWGRS).

Belongs to the herpesviridae TRM1 protein family. Associates with TRM2 and TRM3 to form the tripartite terminase complex. Interacts with portal protein.

Its subcellular location is the host nucleus. In terms of biological role, component of the molecular motor that translocates viral genomic DNA in empty capsid during DNA packaging. Forms a tripartite terminase complex together with TRM2 and TRM3 in the host cytoplasm. Once the complex reaches the host nucleus, it interacts with the capsid portal vertex. This portal forms a ring in which genomic DNA is translocated into the capsid. TRM1 carries an endonuclease activity that plays an important role for the cleavage of concatemeric viral DNA into unit length genomes. This Epstein-Barr virus (strain B95-8) (HHV-4) protein is Tripartite terminase subunit 1.